The following is a 394-amino-acid chain: Elongation factor Tu (394 aa).

One can recognise a tr-type G domain in the interval 10–204 (KPHINIGTIG…AVDDNIPTPE (195 aa)). Positions 19-26 (GHVDHGKT) are G1. 19–26 (GHVDHGKT) contacts GTP. Thr-26 is a Mg(2+) binding site. The interval 60–64 (GITIN) is G2. A G3 region spans residues 81-84 (DCPG). GTP contacts are provided by residues 81 to 85 (DCPGH) and 136 to 139 (NKID). The G4 stretch occupies residues 136–139 (NKID). The tract at residues 174–176 (SAL) is G5.

This sequence belongs to the TRAFAC class translation factor GTPase superfamily. Classic translation factor GTPase family. EF-Tu/EF-1A subfamily. In terms of assembly, monomer.

The protein resides in the cytoplasm. It carries out the reaction GTP + H2O = GDP + phosphate + H(+). Functionally, GTP hydrolase that promotes the GTP-dependent binding of aminoacyl-tRNA to the A-site of ribosomes during protein biosynthesis. This chain is Elongation factor Tu, found in Chlamydia felis (strain Fe/C-56) (Chlamydophila felis).